Consider the following 555-residue polypeptide: Transmembrane protein 87B (555 aa).

The N-terminal stretch at 1–42 (MVAACRSVAGLLPRRRRCFPARAPLLRVALCLLCWTPAAVRA) is a signal peptide. Residues 43-214 (VPELGLWLET…PHGYISASDW (172 aa)) lie on the Lumenal side of the membrane. 2 N-linked (GlcNAc...) asparagine glycosylation sites follow: Asn-68 and Asn-197. A helical membrane pass occupies residues 215–235 (PLMIFYMVMCIVYILYGILWL). Residues 236–247 (TWSACYWKDILR) lie on the Cytoplasmic side of the membrane. The chain crosses the membrane as a helical span at residues 248-268 (IQFWIAAVIFLGMLEKAVFYS). Over 269 to 299 (EYQNISNTGLSTQGLLIFAELISAIKRTLAR) the chain is Lumenal. An N-linked (GlcNAc...) asparagine glycan is attached at Asn-272. The helical transmembrane segment at 300-320 (LLVIIVSLGYGIVKPRLGTVM) threads the bilayer. The Cytoplasmic portion of the chain corresponds to 321–322 (HR). The helical transmembrane segment at 323 to 343 (VIGLGLLYLIFAAVEGVMRVI) threads the bilayer. Over 344-350 (GGSNHLA) the chain is Lumenal. A helical transmembrane segment spans residues 351-371 (VVLDDIILAVIDSIFVWFIFI). Topologically, residues 372–396 (SLAQTMKTLRLRKNTVKFSLYRHFK) are cytoplasmic. A helical membrane pass occupies residues 397–417 (NTLIFAVLASIVFMGWTTKTF). Topologically, residues 418 to 429 (RIAKCQSDWMER) are lumenal. Residues 430-450 (WVDDAFWSFLFSLILIVIMFL) traverse the membrane as a helical segment. At 451 to 555 (WRPSANNQRY…EKMFSSEKIM (105 aa)) the chain is on the cytoplasmic side. Ser-469, Ser-494, Ser-496, and Ser-534 each carry phosphoserine.

Belongs to the LU7TM family. TMEM87 subfamily.

The protein resides in the golgi apparatus membrane. May be involved in retrograde transport from endosomes to the trans-Golgi network (TGN). This is Transmembrane protein 87B from Homo sapiens (Human).